Consider the following 72-residue polypeptide: Conotoxin VnMKLT2-021 (72 aa).

Positions Met1–Ala22 are cleaved as a signal peptide. A propeptide spanning residues Ala23–Thr45 is cleaved from the precursor. 3 cysteine pairs are disulfide-bonded: Cys48–Cys62, Cys55–Cys66, and Cys61–Cys71.

It belongs to the conotoxin O1 superfamily. In terms of tissue distribution, expressed by the venom duct.

The protein resides in the secreted. The polypeptide is Conotoxin VnMKLT2-021 (Conus ventricosus (Mediterranean cone)).